The primary structure comprises 263 residues: Post-GPI attachment to proteins factor 2 (263 aa).

6 helical membrane passes run 16–36, 69–89, 109–129, 143–163, 180–200, and 208–228; these read FVICIGGLPSSALLICVILSL, YIWRILIGLHIGPRLVVAIAF, FLCNLACFLNLLENFFLLALT, CFGGFAICSIIYMLLSTWLFN, YKILGAAIFVLCFFLGAYLYW, and PGIYTLFALVEYSAVLSNIFF.

The protein belongs to the PGAP2 family.

Its subcellular location is the golgi apparatus membrane. The protein localises to the endoplasmic reticulum membrane. Involved in the lipid remodeling steps of GPI-anchor maturation. Required for stable expression of GPI-anchored proteins at the cell surface. In Caenorhabditis elegans, this protein is Post-GPI attachment to proteins factor 2.